The primary structure comprises 309 residues: MSIRIIPQDELGSSEKRTADMIPPLLFPRLKNLYNRRAERLRELAENNPLGDYLRFAALIAHAQEVVLYDHPLEMDLTTRIKEASAQGKPPLDIHVLPRDKHWQKLLMALIAELKPEMSGPALAVIENLEKASTQELEDMASALFASDFSSVSSDKAPFIWAALSLYWAQMANLIPGKARAEYGEQRQYCPVCGSMPVSSMVQIGTTQGLRYLHCNLCETEWHVVRVKCSNCEQSGKLHYWSLDDEQAAIKAESCDDCGTYLKILYQEKEPKVEAVADDLASLVLDARMEQEGYARSSINPFLFPGEGE.

The protein belongs to the FdhE family.

The protein resides in the cytoplasm. Its function is as follows. Necessary for formate dehydrogenase activity. This Escherichia coli O45:K1 (strain S88 / ExPEC) protein is Protein FdhE.